Reading from the N-terminus, the 430-residue chain is tRNA(Ile)-lysidine synthase (430 aa).

21–26 (SGGLDS) provides a ligand contact to ATP.

Belongs to the tRNA(Ile)-lysidine synthase family.

It localises to the cytoplasm. The enzyme catalyses cytidine(34) in tRNA(Ile2) + L-lysine + ATP = lysidine(34) in tRNA(Ile2) + AMP + diphosphate + H(+). Ligates lysine onto the cytidine present at position 34 of the AUA codon-specific tRNA(Ile) that contains the anticodon CAU, in an ATP-dependent manner. Cytidine is converted to lysidine, thus changing the amino acid specificity of the tRNA from methionine to isoleucine. This chain is tRNA(Ile)-lysidine synthase, found in Salmonella choleraesuis (strain SC-B67).